We begin with the raw amino-acid sequence, 133 residues long: Small ribosomal subunit protein uS8 (133 aa).

Belongs to the universal ribosomal protein uS8 family. As to quaternary structure, part of the 30S ribosomal subunit. Contacts proteins S5 and S12.

Functionally, one of the primary rRNA binding proteins, it binds directly to 16S rRNA central domain where it helps coordinate assembly of the platform of the 30S subunit. The sequence is that of Small ribosomal subunit protein uS8 from Prochlorococcus marinus (strain AS9601).